Reading from the N-terminus, the 187-residue chain is uncharacterized protein (187 aa).

4 helical membrane passes run 29 to 50 (IFID…VYWI), 70 to 92 (FVIG…INAY), 128 to 147 (IFFA…SVLR), and 154 to 176 (LALV…ISYL).

It localises to the cell membrane. This is an uncharacterized protein from Archaeoglobus fulgidus (strain ATCC 49558 / DSM 4304 / JCM 9628 / NBRC 100126 / VC-16).